We begin with the raw amino-acid sequence, 282 residues long: Casein kinase II subunit beta-2 (282 aa).

The disordered stretch occupies residues 1–92 (MYRERGMVGS…ESEVSGSDGE (92 aa)). A compositionally biased stretch (basic and acidic residues) spans 13–28 (EVVDRKRINEIHDNRP). Polar residues-rich tracts occupy residues 29–47 (SHSMSQPVNGKGKVTSTSV) and 61–71 (RSGSISKTNIS). Acidic residues predominate over residues 75 to 92 (DISDTDSEESEVSGSDGE).

This sequence belongs to the casein kinase 2 subunit beta family. In terms of assembly, heterotetramer of two catalytic alpha subunits and two regulatory beta subunits. Interacts with CCA1. In terms of processing, phosphorylated by alpha subunit.

Its subcellular location is the cytoplasm. The protein localises to the cytosol. It localises to the nucleus. Its function is as follows. Plays a complex role in regulating the basal catalytic activity of the alpha subunit. The tetrameric holoenzyme CK2, composed of two alpha and two beta subunits, phosphorylates the transcription factor PIF1 after an exposure to light, resulting in a proteasome-dependent degradation of PIF1 and promotion of photomorphogenesis. CK2 phosphorylates translation initiation factors. May participate in the regulation of the initiation of translation. This Arabidopsis thaliana (Mouse-ear cress) protein is Casein kinase II subunit beta-2 (CKB2).